A 1262-amino-acid chain; its full sequence is Putative late blight resistance protein homolog R1B-23 (1262 aa).

Coiled coils occupy residues 364–384 (DSLAFLKNQLQVIQTKFESMQ) and 475–496 (RMNEEIVGFEDVIETLRKKLLN). Positions 475–761 (RMNEEIVGFE…ISESFIKSCE (287 aa)) constitute an NB-ARC domain. 508–515 (GMPGLGKT) contacts ATP. LRR repeat units follow at residues 890-914 (FKFLKVLDLEHQVVIDSIPTELFYL), 933-961 (LWNLETLILNRTSAATGKTLLLPSTVWDM), 1036-1059 (PIRLEMLKLHQSNIFKPISFCISA), 1064-1083 (YLELSGFYLDSQYLSETADH), 1084-1112 (LKHLEVLKLYYVEFGDHREWKVSNGMFPQ), and 1133-1157 (FPNLEQLVLRRCRHLMEIPSCFMDI). The 68-residue stretch at 1181–1248 (ETQVEDNQNT…KLRNVAYADE (68 aa)) folds into the HMA domain.

The protein belongs to the disease resistance NB-LRR family.

It localises to the cytoplasm. It is found in the membrane. In terms of biological role, confers resistance to late blight (Phytophthora infestans) races carrying the avirulence gene Avr1. Resistance proteins guard the plant against pathogens that contain an appropriate avirulence protein via an indirect interaction with this avirulence protein. That triggers a defense system including the hypersensitive response, which restricts the pathogen growth. The sequence is that of Putative late blight resistance protein homolog R1B-23 (R1B-23) from Solanum demissum (Wild potato).